The following is a 128-amino-acid chain: Small ribosomal subunit protein bS6 (128 aa).

Belongs to the bacterial ribosomal protein bS6 family.

Binds together with bS18 to 16S ribosomal RNA. In Nitratiruptor sp. (strain SB155-2), this protein is Small ribosomal subunit protein bS6.